Consider the following 482-residue polypeptide: UDP-N-acetylmuramate--L-alanine ligase (482 aa).

An ATP-binding site is contributed by glycine 123–threonine 129.

It belongs to the MurCDEF family.

The protein localises to the cytoplasm. It carries out the reaction UDP-N-acetyl-alpha-D-muramate + L-alanine + ATP = UDP-N-acetyl-alpha-D-muramoyl-L-alanine + ADP + phosphate + H(+). The protein operates within cell wall biogenesis; peptidoglycan biosynthesis. Cell wall formation. This chain is UDP-N-acetylmuramate--L-alanine ligase, found in Pseudomonas entomophila (strain L48).